The chain runs to 194 residues: dCTP deaminase (194 aa).

Residues 110–115 (RSSLAR), aspartate 128, 136–138 (VLE), tyrosine 171, lysine 178, and glutamine 182 contribute to the dCTP site. The active-site Proton donor/acceptor is glutamate 138.

It belongs to the dCTP deaminase family. Homotrimer.

It catalyses the reaction dCTP + H2O + H(+) = dUTP + NH4(+). It participates in pyrimidine metabolism; dUMP biosynthesis; dUMP from dCTP (dUTP route): step 1/2. Catalyzes the deamination of dCTP to dUTP. The polypeptide is dCTP deaminase (Mannheimia succiniciproducens (strain KCTC 0769BP / MBEL55E)).